The following is a 680-amino-acid chain: DNA-directed RNA polymerase subunit beta' (680 aa).

Cysteine 69, cysteine 71, cysteine 87, and cysteine 90 together coordinate Zn(2+). 3 residues coordinate Mg(2+): aspartate 489, aspartate 491, and aspartate 493.

Belongs to the RNA polymerase beta' chain family. RpoC1 subfamily. As to quaternary structure, in plastids the minimal PEP RNA polymerase catalytic core is composed of four subunits: alpha, beta, beta', and beta''. When a (nuclear-encoded) sigma factor is associated with the core the holoenzyme is formed, which can initiate transcription. Mg(2+) is required as a cofactor. Requires Zn(2+) as cofactor.

It is found in the plastid. The protein localises to the chloroplast. The enzyme catalyses RNA(n) + a ribonucleoside 5'-triphosphate = RNA(n+1) + diphosphate. DNA-dependent RNA polymerase catalyzes the transcription of DNA into RNA using the four ribonucleoside triphosphates as substrates. The polypeptide is DNA-directed RNA polymerase subunit beta' (Draba nemorosa (Woodland whitlowgrass)).